Here is a 496-residue protein sequence, read N- to C-terminus: L-carnitine dehydrogenase/betainyl-CoA thioesterase (496 aa).

The segment at 1–335 is L-carnitine dehydrogenase; sequence MTTITKAACI…KRLWEKGGSP (335 aa). NAD(+) is bound at residue 11-16; the sequence is GGGVIG. Residues 336-496 are betainyl-CoA thioesterase; it reads SKSLDASGPL…GAGRHVGQKR (161 aa).

In the N-terminal section; belongs to the 3-hydroxyacyl-CoA dehydrogenase family. L-carnitine dehydrogenase subfamily. It in the C-terminal section; belongs to the betainyl-CoA thioesterase family. Homodimer.

It is found in the cytoplasm. The catalysed reaction is carnitine + NAD(+) = 3-dehydrocarnitine + NADH + H(+). It catalyses the reaction N,N,N-trimethylglycyl-CoA + H2O = glycine betaine + CoA + H(+). The protein operates within amine and polyamine metabolism; carnitine metabolism. Functionally, multifunctional enzyme that catalyzes the NAD(+)-dependent oxidation of L-carnitine to 3-dehydrocarnitine and the cleavage of betainyl-CoA (N,N,N-trimethylglycyl-CoA) into glycine betaine and coenzyme A. Can also hydrolyze L-carnitinyl-CoA, but with much lower efficiency. Is involved in a L-carnitine degradation pathway that allows R.meliloti to grow on L-carnitine as the sole source of carbon and nitrogen. This Rhizobium meliloti (strain 1021) (Ensifer meliloti) protein is L-carnitine dehydrogenase/betainyl-CoA thioesterase.